The primary structure comprises 416 residues: Serine hydroxymethyltransferase (416 aa).

Residues leucine 121 and 125-127 (GHL) each bind (6S)-5,6,7,8-tetrahydrofolate. N6-(pyridoxal phosphate)lysine is present on lysine 230. 355–357 (SPF) is a binding site for (6S)-5,6,7,8-tetrahydrofolate.

This sequence belongs to the SHMT family. In terms of assembly, homodimer. Pyridoxal 5'-phosphate is required as a cofactor.

Its subcellular location is the cytoplasm. It catalyses the reaction (6R)-5,10-methylene-5,6,7,8-tetrahydrofolate + glycine + H2O = (6S)-5,6,7,8-tetrahydrofolate + L-serine. Its pathway is one-carbon metabolism; tetrahydrofolate interconversion. It participates in amino-acid biosynthesis; glycine biosynthesis; glycine from L-serine: step 1/1. In terms of biological role, catalyzes the reversible interconversion of serine and glycine with tetrahydrofolate (THF) serving as the one-carbon carrier. This reaction serves as the major source of one-carbon groups required for the biosynthesis of purines, thymidylate, methionine, and other important biomolecules. Also exhibits THF-independent aldolase activity toward beta-hydroxyamino acids, producing glycine and aldehydes, via a retro-aldol mechanism. The protein is Serine hydroxymethyltransferase of Streptococcus thermophilus (strain ATCC BAA-250 / LMG 18311).